We begin with the raw amino-acid sequence, 343 residues long: Aspartate carbamoyltransferase catalytic subunit (343 aa).

2 residues coordinate carbamoyl phosphate: Arg71 and Thr72. Lys99 lines the L-aspartate pocket. Residues Arg121, His149, and Gln152 each contribute to the carbamoyl phosphate site. L-aspartate contacts are provided by Arg195 and Arg249. Gly290 and Pro291 together coordinate carbamoyl phosphate.

This sequence belongs to the aspartate/ornithine carbamoyltransferase superfamily. ATCase family. As to quaternary structure, heterododecamer (2C3:3R2) of six catalytic PyrB chains organized as two trimers (C3), and six regulatory PyrI chains organized as three dimers (R2).

The enzyme catalyses carbamoyl phosphate + L-aspartate = N-carbamoyl-L-aspartate + phosphate + H(+). The protein operates within pyrimidine metabolism; UMP biosynthesis via de novo pathway; (S)-dihydroorotate from bicarbonate: step 2/3. Functionally, catalyzes the condensation of carbamoyl phosphate and aspartate to form carbamoyl aspartate and inorganic phosphate, the committed step in the de novo pyrimidine nucleotide biosynthesis pathway. This chain is Aspartate carbamoyltransferase catalytic subunit, found in Rhodopirellula baltica (strain DSM 10527 / NCIMB 13988 / SH1).